A 202-amino-acid polypeptide reads, in one-letter code: Proteasome subunit beta 1 (202 aa).

Position 1 (Met-1) is a propeptide, removed in mature form; by autocatalysis. Thr-2 serves as the catalytic Nucleophile.

The protein belongs to the peptidase T1B family. As to quaternary structure, the 20S proteasome core is composed of 14 alpha and 14 beta subunits that assemble into four stacked heptameric rings, resulting in a barrel-shaped structure. The two inner rings, each composed of seven catalytic beta subunits, are sandwiched by two outer rings, each composed of seven alpha subunits. The catalytic chamber with the active sites is on the inside of the barrel. Has a gated structure, the ends of the cylinder being occluded by the N-termini of the alpha-subunits. Is capped at one or both ends by the proteasome regulatory ATPase, PAN.

The protein resides in the cytoplasm. The catalysed reaction is Cleavage of peptide bonds with very broad specificity.. With respect to regulation, the formation of the proteasomal ATPase PAN-20S proteasome complex, via the docking of the C-termini of PAN into the intersubunit pockets in the alpha-rings, triggers opening of the gate for substrate entry. Interconversion between the open-gate and close-gate conformations leads to a dynamic regulation of the 20S proteasome proteolysis activity. In terms of biological role, component of the proteasome core, a large protease complex with broad specificity involved in protein degradation. The polypeptide is Proteasome subunit beta 1 (Pyrobaculum arsenaticum (strain DSM 13514 / JCM 11321 / PZ6)).